Here is a 531-residue protein sequence, read N- to C-terminus: Splicing factor ESS-2 (531 aa).

Disordered regions lie at residues 104–163 (RTPI…RKKK) and 453–531 (PFAS…GDFF). Over residues 105–114 (TPITTRSTTE) the composition is skewed to polar residues. Low complexity-rich tracts occupy residues 125–136 (TPGPSSASTSSA) and 464–477 (SRPSSSKRSTTPGS). The segment covering 480 to 498 (SRGSTTPGSSWSQGAQTPG) has biased composition (polar residues).

The protein belongs to the ESS2 family.

Its subcellular location is the nucleus. Regulates pre-mRNA splicing. The polypeptide is Splicing factor ESS-2 (ess-2) (Caenorhabditis elegans).